The chain runs to 176 residues: Ribosome rescue factor SmrB (176 aa).

Residues 93-168 (LDLHGYRQSE…GDAALLVLID (76 aa)) form the Smr domain.

It belongs to the SmrB family. Associates with collided ribosomes, but not with correctly translating polysomes.

In terms of biological role, acts as a ribosome collision sensor. Detects stalled/collided disomes (pairs of ribosomes where the leading ribosome is stalled and a second ribosome has collided with it) and endonucleolytically cleaves mRNA at the 5' boundary of the stalled ribosome. Stalled/collided disomes form a new interface (primarily via the 30S subunits) that binds SmrB. Cleaved mRNA becomes available for tmRNA ligation, leading to ribosomal subunit dissociation and rescue of stalled ribosomes. The polypeptide is Ribosome rescue factor SmrB (Shewanella sp. (strain ANA-3)).